Here is a 311-residue protein sequence, read N- to C-terminus: MTIRLLGRTEIRHLAKSIDFRPRKSFGQNFVHDANTVRRIVSASSINRSDHVLEVGPGLGSLTLALLDRGAKVTAVEIDPVLANQLPTTIAAHSHSEVNRLTVLNRDILTFKQSDMTEMPTALVANLPYNVAVPALLHLLAEFPSIRTVMVMVQAEVAERLAAEPGGKDYGVPSAKVRFFGNVRRYGMVSPTVFWPIPRVYSGLVRIDRYETSPWPTDPEFRQQVFELIDVAFAQRRKTSRNAFAEWAGSGNESASRLLAASIDPSRRGETLSINDFVRLLQRSADWHVVPKPESAATAVATDEDAQVPTL.

Positions 29, 31, 56, 77, 107, and 126 each coordinate S-adenosyl-L-methionine.

Belongs to the class I-like SAM-binding methyltransferase superfamily. rRNA adenine N(6)-methyltransferase family. RsmA subfamily.

Its subcellular location is the cytoplasm. It catalyses the reaction adenosine(1518)/adenosine(1519) in 16S rRNA + 4 S-adenosyl-L-methionine = N(6)-dimethyladenosine(1518)/N(6)-dimethyladenosine(1519) in 16S rRNA + 4 S-adenosyl-L-homocysteine + 4 H(+). Its function is as follows. Specifically dimethylates two adjacent adenosines (A1518 and A1519) in the loop of a conserved hairpin near the 3'-end of 16S rRNA in the 30S particle. May play a critical role in biogenesis of 30S subunits. This chain is Ribosomal RNA small subunit methyltransferase A, found in Mycolicibacterium vanbaalenii (strain DSM 7251 / JCM 13017 / BCRC 16820 / KCTC 9966 / NRRL B-24157 / PYR-1) (Mycobacterium vanbaalenii).